The following is a 267-amino-acid chain: Indole-3-glycerol phosphate synthase (267 aa).

Belongs to the TrpC family.

The enzyme catalyses 1-(2-carboxyphenylamino)-1-deoxy-D-ribulose 5-phosphate + H(+) = (1S,2R)-1-C-(indol-3-yl)glycerol 3-phosphate + CO2 + H2O. Its pathway is amino-acid biosynthesis; L-tryptophan biosynthesis; L-tryptophan from chorismate: step 4/5. In Cupriavidus taiwanensis (strain DSM 17343 / BCRC 17206 / CCUG 44338 / CIP 107171 / LMG 19424 / R1) (Ralstonia taiwanensis (strain LMG 19424)), this protein is Indole-3-glycerol phosphate synthase.